A 501-amino-acid polypeptide reads, in one-letter code: NAD(P)H-quinone oxidoreductase subunit 2, chloroplastic (501 aa).

14 consecutive transmembrane segments (helical) span residues 15-35 (ILPE…DLTF), 40-60 (TIWL…ILLF), 82-102 (IFQS…IEYI), 107-127 (MAIP…MFLC), 132-152 (LVTI…LCGY), 167-187 (LLIG…LYGL), 212-232 (TFIA…LVPF), 244-264 (PTPV…ALAT), 278-298 (WKIF…LVAI), 307-327 (LAYS…TGDL), 333-353 (MTIY…CIIL), 378-398 (FSLT…GFFG), 410-430 (GFYL…YYYL), and 466-486 (FVMI…NPIF).

The protein belongs to the complex I subunit 2 family. As to quaternary structure, NDH is composed of at least 16 different subunits, 5 of which are encoded in the nucleus.

Its subcellular location is the plastid. It localises to the chloroplast thylakoid membrane. It catalyses the reaction a plastoquinone + NADH + (n+1) H(+)(in) = a plastoquinol + NAD(+) + n H(+)(out). The enzyme catalyses a plastoquinone + NADPH + (n+1) H(+)(in) = a plastoquinol + NADP(+) + n H(+)(out). Functionally, NDH shuttles electrons from NAD(P)H:plastoquinone, via FMN and iron-sulfur (Fe-S) centers, to quinones in the photosynthetic chain and possibly in a chloroplast respiratory chain. The immediate electron acceptor for the enzyme in this species is believed to be plastoquinone. Couples the redox reaction to proton translocation, and thus conserves the redox energy in a proton gradient. This chain is NAD(P)H-quinone oxidoreductase subunit 2, chloroplastic, found in Marchantia polymorpha (Common liverwort).